Reading from the N-terminus, the 144-residue chain is Small ribosomal subunit protein uS19 (144 aa).

This sequence belongs to the universal ribosomal protein uS19 family.

The polypeptide is Small ribosomal subunit protein uS19 (rps15) (Dictyostelium discoideum (Social amoeba)).